We begin with the raw amino-acid sequence, 164 residues long: Reticulon-like protein B22 (164 aa).

Positions 1-164 constitute a Reticulon domain; it reads MGEMGKAMGL…ILEQEAHSDT (164 aa). 2 consecutive transmembrane segments (helical) span residues 30 to 50 and 117 to 137; these read SLFSDVFIVLLCSLAILGLLF and LISGVTVAYAGLCLFCLSMLC.

The protein localises to the endoplasmic reticulum membrane. This chain is Reticulon-like protein B22 (RTNLB22), found in Arabidopsis thaliana (Mouse-ear cress).